Consider the following 280-residue polypeptide: Bis(5'-nucleosyl)-tetraphosphatase, symmetrical (280 aa).

The protein belongs to the Ap4A hydrolase family.

It carries out the reaction P(1),P(4)-bis(5'-adenosyl) tetraphosphate + H2O = 2 ADP + 2 H(+). Hydrolyzes diadenosine 5',5'''-P1,P4-tetraphosphate to yield ADP. The chain is Bis(5'-nucleosyl)-tetraphosphatase, symmetrical from Escherichia coli O17:K52:H18 (strain UMN026 / ExPEC).